The primary structure comprises 547 residues: Chaperonin GroEL (547 aa).

ATP contacts are provided by residues 30-33 (TLGP), K51, 87-91 (DGTTT), G415, and D496.

It belongs to the chaperonin (HSP60) family. Forms a cylinder of 14 subunits composed of two heptameric rings stacked back-to-back. Interacts with the co-chaperonin GroES.

The protein resides in the cytoplasm. The enzyme catalyses ATP + H2O + a folded polypeptide = ADP + phosphate + an unfolded polypeptide.. Together with its co-chaperonin GroES, plays an essential role in assisting protein folding. The GroEL-GroES system forms a nano-cage that allows encapsulation of the non-native substrate proteins and provides a physical environment optimized to promote and accelerate protein folding. This is Chaperonin GroEL from Mannheimia succiniciproducens (strain KCTC 0769BP / MBEL55E).